Reading from the N-terminus, the 143-residue chain is FAD synthase (143 aa).

ATP is bound by residues 11–12 (TF), 16–19 (HPGH), and Asp-94.

It belongs to the archaeal FAD synthase family. In terms of assembly, homodimer. The cofactor is a divalent metal cation.

The enzyme catalyses FMN + ATP + H(+) = FAD + diphosphate. The protein operates within cofactor biosynthesis; FAD biosynthesis; FAD from FMN: step 1/1. Functionally, catalyzes the transfer of the AMP portion of ATP to flavin mononucleotide (FMN) to produce flavin adenine dinucleotide (FAD) coenzyme. This chain is FAD synthase, found in Halomicrobium mukohataei (strain ATCC 700874 / DSM 12286 / JCM 9738 / NCIMB 13541) (Haloarcula mukohataei).